Consider the following 335-residue polypeptide: ETS translocation variant 2 (335 aa).

Disordered stretches follow at residues 94–138 (DPWS…SWSH) and 201–220 (GHQS…SDRA). The span at 205 to 220 (PAFTTPSKSNKQSDRA) shows a compositional bias: polar residues. The segment at residues 234–314 (IQLWQFLLEL…GGRKYTYRFG (81 aa)) is a DNA-binding region (ETS).

Belongs to the ETS family. In terms of tissue distribution, testis.

It localises to the nucleus. Functionally, binds to DNA sequences containing the consensus pentanucleotide 5'-CGGA[AT]-3'. In Mus musculus (Mouse), this protein is ETS translocation variant 2 (Etv2).